Here is a 482-residue protein sequence, read N- to C-terminus: Pre-glycoprotein polyprotein GP complex (482 aa).

Glycine 2 is lipidated: N-myristoyl glycine; by host. Residues 2–17 (GQFISFMQEIPIFLQE) lie on the Extracellular side of the membrane. The helical transmembrane segment at 18–32 (ALNIALVAVSLICIV) threads the bilayer. Lysine 33 is a topological domain (cytoplasmic). A helical membrane pass occupies residues 34-53 (GLVNLYRCGLFQLMVFLVLA). 2 consecutive stretches face the extracellular side: residues 54 to 58 (GRSCS) and 59 to 421 (EETF…TLVD). Cysteine 57 serves as a coordination point for Zn(2+). Residues asparagine 83 and asparagine 95 are each glycosylated (N-linked (GlcNAc...) asparagine; by host). Intrachain disulfides connect cysteine 92–cysteine 224, cysteine 134–cysteine 162, cysteine 205–cysteine 211, cysteine 269–cysteine 282, and cysteine 353–cysteine 374. N-linked (GlcNAc...) asparagine; by host glycosylation is found at asparagine 164 and asparagine 176. Asparagine 354, asparagine 362, asparagine 379, and asparagine 384 each carry an N-linked (GlcNAc...) asparagine; by host glycan. A helical transmembrane segment spans residues 422-442 (ICFWSTEFFISTLFLHLIGFP). Topologically, residues 443-482 (THEHIRGEGCPLPHRLNSMGGCRCGKYLPLKKPTIWHRRH) are cytoplasmic. Positions 444, 446, 452, 456, 464, 466, and 482 each coordinate Zn(2+).

This sequence belongs to the arenaviridae GPC protein family. In terms of assembly, homotetramer; disulfide-linked. Homotetramer. GP2 homotetramers bind through ionic interactions with GP1 homotetramers to form the GP complex together with the stable signal peptide. The GP-C polyprotein interacts with the host protease MBTPS1/SKI-1 resulting in the polyprotein processing. In terms of processing, specific enzymatic cleavages in vivo yield mature proteins. GP-C polyprotein is cleaved in the endoplasmic reticulum by the host protease MBTPS1. Only cleaved glycoprotein is incorporated into virions. Post-translationally, the SSP remains stably associated with the GP complex following cleavage by signal peptidase and plays crucial roles in the trafficking of GP through the secretory pathway. Myristoylation is necessary for GP2-mediated fusion activity.

The protein localises to the virion membrane. Its subcellular location is the host endoplasmic reticulum membrane. The protein resides in the host Golgi apparatus membrane. It is found in the host cell membrane. In terms of biological role, class I viral fusion protein that directs fusion of viral and host endosomal membranes, leading to delivery of the nucleocapsid into the cytoplasm. Membrane fusion is mediated by irreversible conformational changes induced upon acidification in the endosome. Stable signal peptide (SSP): cleaved and functions as a signal peptide. In addition, it is also retained as the third component of the GP complex. The SSP is required for efficient glycoprotein expression, post-translational maturation cleavage of GP1 and GP2, glycoprotein transport to the cell surface plasma membrane, formation of infectious virus particles, and acid pH-dependent glycoprotein-mediated cell fusion. Its function is as follows. Interacts with the host receptor. The sequence is that of Pre-glycoprotein polyprotein GP complex from Artibeus (neotropical fruit bats).